Here is a 362-residue protein sequence, read N- to C-terminus: Glutamate 5-kinase (362 aa).

Residue Lys3 participates in ATP binding. The substrate site is built by Ser43, Asp128, and Asn140. Residues 160–161 and 202–208 each bind ATP; these read TD and TGGMRTK. Positions 267-348 constitute a PUA domain; sequence AGAILVDAGA…REIENVLGYS (82 aa).

The protein belongs to the glutamate 5-kinase family.

It localises to the cytoplasm. It carries out the reaction L-glutamate + ATP = L-glutamyl 5-phosphate + ADP. It participates in amino-acid biosynthesis; L-proline biosynthesis; L-glutamate 5-semialdehyde from L-glutamate: step 1/2. Catalyzes the transfer of a phosphate group to glutamate to form L-glutamate 5-phosphate. In Xanthomonas oryzae pv. oryzae (strain KACC10331 / KXO85), this protein is Glutamate 5-kinase.